Reading from the N-terminus, the 834-residue chain is ATP-dependent RNA helicase ddx23 (834 aa).

Disordered stretches follow at residues 1–245 (MDPP…TQFS) and 322–371 (FGGY…GKQI). Basic and acidic residues predominate over residues 10 to 25 (SKRDTKKKDEVNKEQP). The segment covering 42–54 (SNPTQEEPTNTLQ) has biased composition (polar residues). Composition is skewed to basic and acidic residues over residues 70–110 (GLKE…DYRD), 117–164 (GRDR…RRDG), 171–205 (RRRDERRENSGRRDYRDNDRRDDRRDNGRYGRDND), and 231–245 (DIHKDRIKRDTTQFS). Residues 328-362 (NNNNNGNHYNGNIYNNNNNNNNNNNNNNNINNNNN) are compositionally biased toward low complexity. The Q motif signature appears at 413 to 441 (RTWQESNLPREILEAIRQLGYEKPSPIQM). Positions 444–643 (IPISLTGRDI…KKYLRRPCTI (200 aa)) constitute a Helicase ATP-binding domain. 457 to 464 (AETGSGKT) contributes to the ATP binding site. The short motif at 570–573 (DEAD) is the DEAD box element. Residues 654 to 815 (RIRQTVIFVK…IVPIELLKHP (162 aa)) enclose the Helicase C-terminal domain. The interval 813-834 (KHPSSQQKHGSSKDHNKSVIFK) is disordered. The segment covering 823–834 (SSKDHNKSVIFK) has biased composition (basic and acidic residues).

Belongs to the DEAD box helicase family. DDX23/PRP28 subfamily.

It localises to the cytoplasm. The protein resides in the nucleus. It carries out the reaction ATP + H2O = ADP + phosphate + H(+). Functionally, probable ATP-dependent RNA helicase which may be involved in mRNA splicing. This chain is ATP-dependent RNA helicase ddx23 (helB2), found in Dictyostelium discoideum (Social amoeba).